The sequence spans 718 residues: Quinohemoprotein alcohol dehydrogenase ADH-IIG (718 aa).

The signal sequence occupies residues 1-29 (MRQTGLASLPLKSLAVAVLLSLAGTPALA). Residue glutamate 92 participates in pyrroloquinoline quinone binding. A disulfide bridge connects residues cysteine 138 and cysteine 139. Pyrroloquinoline quinone is bound by residues arginine 144, threonine 189, and 205–206 (GA). Glutamate 207 lines the Ca(2+) pocket. Threonine 264 provides a ligand contact to pyrroloquinoline quinone. Asparagine 284 and aspartate 329 together coordinate Ca(2+). The Proton acceptor role is filled by aspartate 329. Lysine 356 is a pyrroloquinoline quinone binding site. Residue tryptophan 415 participates in substrate binding. Pyrroloquinoline quinone contacts are provided by residues 419–420 (DW) and alanine 571. In terms of domain architecture, Cytochrome c spans 622-699 (ASIEAGAKLY…QIHQYLIKRA (78 aa)). 4 residues coordinate heme c: cysteine 635, cysteine 638, histidine 639, and methionine 676.

It belongs to the bacterial PQQ dehydrogenase family. Monomer. The cofactor is pyrroloquinoline quinone. It depends on Ca(2+) as a cofactor. Requires heme c as cofactor.

It is found in the periplasm. The enzyme catalyses 2 oxidized [azurin] + a primary alcohol = 2 reduced [azurin] + an aldehyde + 2 H(+). With respect to regulation, exhibits higher affinity for 1-butanol compared to 1,2-propanediol but inhibited by 10 mM 1-butanol. Functionally, catalyzes the dye-linked oxidation of primary alcohols to the corresponding aldehydes and the (subsequent) oxidation of the aldehydes to carboxylic acids. Active with primary alcohols, glycerol, 1,2-propanediol, 1,3-propanediol but not with methanol or sugar alcohols such as D-sorbitol. This is Quinohemoprotein alcohol dehydrogenase ADH-IIG from Pseudomonas putida (Arthrobacter siderocapsulatus).